Reading from the N-terminus, the 330-residue chain is tRNA U34 carboxymethyltransferase (330 aa).

Carboxy-S-adenosyl-L-methionine-binding positions include Lys98, Trp112, Lys117, Gly137, 187-188 (ME), Met203, Tyr207, and Arg322. Positions 309 to 330 (NPSKTIEGYPGPKRATLIAEKP) are disordered.

The protein belongs to the class I-like SAM-binding methyltransferase superfamily. CmoB family. In terms of assembly, homotetramer.

It carries out the reaction carboxy-S-adenosyl-L-methionine + 5-hydroxyuridine(34) in tRNA = 5-carboxymethoxyuridine(34) in tRNA + S-adenosyl-L-homocysteine + H(+). Functionally, catalyzes carboxymethyl transfer from carboxy-S-adenosyl-L-methionine (Cx-SAM) to 5-hydroxyuridine (ho5U) to form 5-carboxymethoxyuridine (cmo5U) at position 34 in tRNAs. The sequence is that of tRNA U34 carboxymethyltransferase from Marinobacter nauticus (strain ATCC 700491 / DSM 11845 / VT8) (Marinobacter aquaeolei).